The chain runs to 404 residues: 2,3-diketo-5-methylthiopentyl-1-phosphate enolase (404 aa).

The active-site Proton acceptor is the lysine 91. Substrate is bound by residues lysine 140, lysine 166 to glutamate 169, histidine 257, glycine 329, and glycine 351 to glycine 352. The Mg(2+) site is built by lysine 166, aspartate 168, and glutamate 169. Lysine 166 carries the post-translational modification N6-carboxylysine.

It belongs to the RuBisCO large chain family. Type IV subfamily. In terms of assembly, homodimer. Mg(2+) serves as cofactor.

It carries out the reaction 5-methylsulfanyl-2,3-dioxopentyl phosphate = 2-hydroxy-5-methylsulfanyl-3-oxopent-1-enyl phosphate. The protein operates within amino-acid biosynthesis; L-methionine biosynthesis via salvage pathway; L-methionine from S-methyl-5-thio-alpha-D-ribose 1-phosphate: step 3/6. Catalyzes the enolization of 2,3-diketo-5-methylthiopentyl-1-phosphate (DK-MTP-1-P) into 2-hydroxy-3-keto-5-methylthiopentenyl-1-phosphate (HK-MTPenyl-1-P). This is 2,3-diketo-5-methylthiopentyl-1-phosphate enolase from Bacillus velezensis (strain DSM 23117 / BGSC 10A6 / LMG 26770 / FZB42) (Bacillus amyloliquefaciens subsp. plantarum).